A 175-amino-acid chain; its full sequence is ATP synthase subunit delta (175 aa).

It belongs to the ATPase delta chain family. F-type ATPases have 2 components, F(1) - the catalytic core - and F(0) - the membrane proton channel. F(1) has five subunits: alpha(3), beta(3), gamma(1), delta(1), epsilon(1). F(0) has three main subunits: a(1), b(2) and c(10-14). The alpha and beta chains form an alternating ring which encloses part of the gamma chain. F(1) is attached to F(0) by a central stalk formed by the gamma and epsilon chains, while a peripheral stalk is formed by the delta and b chains.

The protein localises to the cell inner membrane. Its function is as follows. F(1)F(0) ATP synthase produces ATP from ADP in the presence of a proton or sodium gradient. F-type ATPases consist of two structural domains, F(1) containing the extramembraneous catalytic core and F(0) containing the membrane proton channel, linked together by a central stalk and a peripheral stalk. During catalysis, ATP synthesis in the catalytic domain of F(1) is coupled via a rotary mechanism of the central stalk subunits to proton translocation. In terms of biological role, this protein is part of the stalk that links CF(0) to CF(1). It either transmits conformational changes from CF(0) to CF(1) or is implicated in proton conduction. The polypeptide is ATP synthase subunit delta (Xanthomonas campestris pv. campestris (strain 8004)).